Consider the following 261-residue polypeptide: Transcription antitermination protein NusB (261 aa).

Positions 168–261 (ARVEDQPSDD…DLHKKDTTDD (94 aa)) are disordered. Positions 217–228 (VDTTSGNASDPE) are enriched in polar residues. Residues 242–261 (PTSKDHELATDLHKKDTTDD) show a composition bias toward basic and acidic residues.

The protein belongs to the NusB family.

In terms of biological role, involved in transcription antitermination. Required for transcription of ribosomal RNA (rRNA) genes. Binds specifically to the boxA antiterminator sequence of the ribosomal RNA (rrn) operons. This is Transcription antitermination protein NusB from Cutibacterium acnes (strain DSM 16379 / KPA171202) (Propionibacterium acnes).